Consider the following 213-residue polypeptide: MKAFTQHNGLVAPLDRANVDTDQIIPKQFLKSIKRTGFGPNLFDEWRYLDVGQPYQDNSKRPLNHDFVLNNARYQGASVLLARENFGCGSSREHAPWALEEYGFCAIIAPSYADIFFNNSFKNGLLPIILAEDDVDQLFKQVEASPGYQLRIDLQAQTVTRPDGEVLSFEIDAFRKHCLLNGLDDIGLTLMDADAIASFEGKHRASQPWLFRD.

The protein belongs to the LeuD family. LeuD type 1 subfamily. As to quaternary structure, heterodimer of LeuC and LeuD.

It catalyses the reaction (2R,3S)-3-isopropylmalate = (2S)-2-isopropylmalate. The protein operates within amino-acid biosynthesis; L-leucine biosynthesis; L-leucine from 3-methyl-2-oxobutanoate: step 2/4. Its function is as follows. Catalyzes the isomerization between 2-isopropylmalate and 3-isopropylmalate, via the formation of 2-isopropylmaleate. This chain is 3-isopropylmalate dehydratase small subunit, found in Pseudomonas syringae pv. tomato (strain ATCC BAA-871 / DC3000).